A 320-amino-acid polypeptide reads, in one-letter code: Integrin-binding sialoprotein (320 aa).

A signal peptide spans 1–16; that stretch reads MKTALILLCILGMASA. Ser-31, Ser-68, Ser-76, Ser-77, and Ser-96 each carry phosphoserine. Disordered stretches follow at residues 60 to 117, 136 to 225, and 238 to 264; these read PVQG…VTAS, LPKK…RELT, and FQQTTPPPEAYGTTSPPARKSSTVEYG. Over residues 67–106 the composition is skewed to acidic residues; sequence SSEENGDGDSSEEEGEEEETSNEEENNEDSEGNEDQEAEA. N-linked (GlcNAc...) asparagine glycosylation is present at Asn-108. Basic and acidic residues predominate over residues 139-152; that stretch reads KAGDAEGKAPKMKE. At Ser-153 the chain carries Phosphoserine. Residues 153-176 show a composition bias toward acidic residues; that stretch reads SDEEEEEEEEEENENEEAEVDENE. Composition is skewed to polar residues over residues 177–188 and 249–261; these read QVVNGTSTNSTE and GTTSPPARKSSTV. Residues Asn-180 and Asn-185 are each glycosylated (N-linked (GlcNAc...) asparagine). The Integrin-binding motif signature appears at 289 to 291; the sequence is RGD. Sulfotyrosine is present on residues Tyr-316 and Tyr-317.

As to quaternary structure, monomer. Interacts with integrins; the interaction promotes cell adhesion.

It is found in the secreted. Binds tightly to hydroxyapatite. Appears to form an integral part of the mineralized matrix. Probably important to cell-matrix interaction. Promotes adhesion and migration of various cells via the alpha-V/beta-3 integrin receptor (ITGAV:ITGB3). The protein is Integrin-binding sialoprotein (Ibsp) of Rattus norvegicus (Rat).